Consider the following 152-residue polypeptide: Transcriptional regulator MraZ (152 aa).

SpoVT-AbrB domains lie at 5-52 (ATLV…PLPE) and 81-124 (ASEC…DETT).

It belongs to the MraZ family. As to quaternary structure, forms oligomers.

It localises to the cytoplasm. Its subcellular location is the nucleoid. In terms of biological role, negatively regulates its own expression and that of the subsequent genes in the proximal part of the division and cell wall (dcw) gene cluster. Acts by binding directly to DNA. May also regulate the expression of genes outside the dcw cluster. The protein is Transcriptional regulator MraZ of Escherichia coli O127:H6 (strain E2348/69 / EPEC).